The primary structure comprises 481 residues: MTDRADADRPATSPTGLRLYDTMTGAVRDFVPLRDGHVSIYLCGATVQGLPHIGHVRSGVAFDVLRRWLTAKGLDVAFIRNVTDIDDKILNKAADAGRPWWEWAATYERAFSAAYDALGVLPPSAEPRATGHITQMVELIERLIDRGHAYTGDGDVYFNVATLPDYGKLSGHRIDDVHQGEGVATGKRDQRDFTLWKGAKPGEPSWPTPWGRGRPGWHTECVAMCEAYLGAEFDIHAGGMDLVFPHHENEIAQAEAAGDGFARFWLHNGWVTMGGEKMSKSLGNVLSIPAVLQRVRAAELRYYLGSAHYRSMLEFSETALQDAVKAYAGVEDFLHRVRTRVGTVVPGDWTPKFAAALDDDLSVPIALAEVHAARAVGNRALDSGDHETAMTQARSIRAMMGILGCDPLDERWESRDETSAALAAIDVLVRWALDSRADARNRKDWATADQIRDRLKEAGIEVTDTADGPQWSLLDGDSKDV.

Residue Cys43 coordinates Zn(2+). The 'HIGH' region motif lies at 45–55 (ATVQGLPHIGH). Zn(2+) is bound by residues Cys221, His246, and Glu250. Residues 277-281 (KMSKS) carry the 'KMSKS' region motif. Lys280 contributes to the ATP binding site.

The protein belongs to the class-I aminoacyl-tRNA synthetase family. Monomer. It depends on Zn(2+) as a cofactor.

The protein localises to the cytoplasm. It carries out the reaction tRNA(Cys) + L-cysteine + ATP = L-cysteinyl-tRNA(Cys) + AMP + diphosphate. This Mycobacterium sp. (strain KMS) protein is Cysteine--tRNA ligase.